The primary structure comprises 147 residues: Allograft inflammatory factor 1 (147 aa).

At serine 2 the chain carries N-acetylserine. Lysine 11 bears the N6-acetyllysine mark. Serine 39 bears the Phosphoserine mark. The EF-hand 1 domain occupies 45 to 80 (SKLEAFKKKYMEFDLNEDGGIDIMSLKRMMEKLGVP). Ca(2+)-binding residues include aspartate 58, asparagine 60, and aspartate 62. The 35-residue stretch at 81-115 (KTHLELKKLIMEVSSGPGETFSYSDFLKMMLGKRS) folds into the EF-hand 2; degenerate domain. Residues 128 to 147 (AREQEKPTGLPAKKAISELP) form a disordered region.

In terms of processing, phosphorylated on serine residues.

It localises to the cytoplasm. The protein localises to the cytoskeleton. The protein resides in the cell projection. Its subcellular location is the ruffle membrane. It is found in the phagocytic cup. Functionally, may play a role in macrophage activation and function. This Bos taurus (Bovine) protein is Allograft inflammatory factor 1 (AIF1).